Consider the following 287-residue polypeptide: Probable WRKY transcription factor 57 (287 aa).

Low complexity predominate over residues 86-99 (TSTNNNPSATSSSS). Residues 86–137 (TSTNNNPSATSSSSEDPAENSTASAEKTPPPETPVKEKKKAQKRIRQPRFAF) form a disordered region. Over residues 122–132 (EKKKAQKRIRQ) the composition is skewed to basic residues. The WRKY DNA-binding region spans 141–206 (SDVDNLEDGY…YEGQHCHQTI (66 aa)). The interval 248-287 (DNNAPSPRLPRPTTEDTPAVSTPSEEGLLGDIVPQTMRNP) is disordered. Over residues 262–271 (EDTPAVSTPS) the composition is skewed to polar residues.

This sequence belongs to the WRKY group II-c family.

The protein resides in the nucleus. Transcription factor. Interacts specifically with the W box (5'-(T)TGAC[CT]-3'), a frequently occurring elicitor-responsive cis-acting element. The sequence is that of Probable WRKY transcription factor 57 (WRKY57) from Arabidopsis thaliana (Mouse-ear cress).